We begin with the raw amino-acid sequence, 395 residues long: Acetate kinase (395 aa).

N8 contacts Mg(2+). K15 lines the ATP pocket. R89 lines the substrate pocket. The active-site Proton donor/acceptor is D146. ATP-binding positions include 206–210 (HLGNG), 281–283 (DLR), and 329–333 (GIGEN). E382 is a binding site for Mg(2+).

The protein belongs to the acetokinase family. Homodimer. The cofactor is Mg(2+). Mn(2+) is required as a cofactor.

The protein localises to the cytoplasm. It carries out the reaction acetate + ATP = acetyl phosphate + ADP. The protein operates within metabolic intermediate biosynthesis; acetyl-CoA biosynthesis; acetyl-CoA from acetate: step 1/2. Its activity is regulated as follows. Induced by glucose excess, the induction may be mediated by CcpA transcriptional regulator. Functionally, catalyzes the formation of acetyl phosphate from acetate and ATP. Can also catalyze the reverse reaction. Appears to favor the formation of acetate. Involved in the secretion of excess carbohydrate. The protein is Acetate kinase of Bacillus subtilis (strain 168).